The chain runs to 506 residues: Histidine ammonia-lyase (506 aa).

Positions 143–145 (ASG) form a cross-link, 5-imidazolinone (Ala-Gly). Position 144 is a 2,3-didehydroalanine (Ser) (serine 144).

This sequence belongs to the PAL/histidase family. Post-translationally, contains an active site 4-methylidene-imidazol-5-one (MIO), which is formed autocatalytically by cyclization and dehydration of residues Ala-Ser-Gly.

It localises to the cytoplasm. The enzyme catalyses L-histidine = trans-urocanate + NH4(+). It functions in the pathway amino-acid degradation; L-histidine degradation into L-glutamate; N-formimidoyl-L-glutamate from L-histidine: step 1/3. The sequence is that of Histidine ammonia-lyase from Salmonella dublin (strain CT_02021853).